Consider the following 142-residue polypeptide: Hemoglobin subunit alpha (142 aa).

Serine 1 is modified (N-acetylserine). The Globin domain occupies 1–142; that stretch reads SLSDKDKAAV…VALALAERYR (142 aa). Histidine 59 contributes to the O2 binding site. Position 88 (histidine 88) interacts with heme b.

This sequence belongs to the globin family. In terms of assembly, hb1 is a heterotetramer of two alpha chains and two beta chains. HbC is a heterotetramer of two alpha chains and two beta-C chains. Red blood cells.

Functionally, involved in oxygen transport from gills to the various peripheral tissues. The sequence is that of Hemoglobin subunit alpha (hba) from Trematomus bernacchii (Emerald rockcod).